Reading from the N-terminus, the 202-residue chain is Orotate phosphoribosyltransferase (202 aa).

Glu113 to Ser121 provides a ligand contact to 5-phospho-alpha-D-ribose 1-diphosphate. Residues Thr117 and Arg145 each coordinate orotate.

It belongs to the purine/pyrimidine phosphoribosyltransferase family. PyrE subfamily. Homodimer. It depends on Mg(2+) as a cofactor.

The enzyme catalyses orotidine 5'-phosphate + diphosphate = orotate + 5-phospho-alpha-D-ribose 1-diphosphate. The protein operates within pyrimidine metabolism; UMP biosynthesis via de novo pathway; UMP from orotate: step 1/2. Functionally, catalyzes the transfer of a ribosyl phosphate group from 5-phosphoribose 1-diphosphate to orotate, leading to the formation of orotidine monophosphate (OMP). The polypeptide is Orotate phosphoribosyltransferase (Campylobacter lari (strain RM2100 / D67 / ATCC BAA-1060)).